The following is a 418-amino-acid chain: Actin-related protein 3B (418 aa).

It belongs to the actin family. ARP3 subfamily. Interacts with the Arp2/3 complex composed of ARP2, ARP3, ARPC1B, ARPC1B/p41-ARC, ARPC2/p34-ARC, ARPC3/p21-ARC, ARPC4/p20-ARC and ARPC5/p16-ARC.

Its subcellular location is the cytoplasm. It is found in the cytoskeleton. It localises to the cell projection. In terms of biological role, plays a role in the organization of the actin cytoskeleton. May function as ATP-binding component of the Arp2/3 complex which is involved in regulation of actin polymerization and together with an activating nucleation-promoting factor (NPF) mediates the formation of branched actin networks. May decrease the metastatic potential of tumors. The polypeptide is Actin-related protein 3B (Actr3b) (Mus musculus (Mouse)).